A 177-amino-acid polypeptide reads, in one-letter code: MVVIVISGPPGGGKTTQARRVAEYFSLRYYSAGMIFREIARSRGLSLEELSIIAANDPSIDIEIDKRTYEEALKGNVVLDGHLTAWIVSNIADIKIYVTAPLHIRIKRIAERDNIDLNKAMHETIIREYVQKKRFMEYYGIDIDDLSIFDLVINTEKLSVEKTFNIIREFIEKFLKE.

An ATP-binding site is contributed by 8-16 (GPPGGGKTT).

It belongs to the cytidylate kinase family. Type 2 subfamily.

It localises to the cytoplasm. The catalysed reaction is CMP + ATP = CDP + ADP. It carries out the reaction dCMP + ATP = dCDP + ADP. The chain is Cytidylate kinase from Staphylothermus marinus (strain ATCC 43588 / DSM 3639 / JCM 9404 / F1).